The sequence spans 196 residues: dTTP/UTP pyrophosphatase (196 aa).

The Proton acceptor role is filled by D75.

It belongs to the Maf family. YhdE subfamily. Requires a divalent metal cation as cofactor.

It is found in the cytoplasm. The enzyme catalyses dTTP + H2O = dTMP + diphosphate + H(+). It catalyses the reaction UTP + H2O = UMP + diphosphate + H(+). Nucleoside triphosphate pyrophosphatase that hydrolyzes dTTP and UTP. May have a dual role in cell division arrest and in preventing the incorporation of modified nucleotides into cellular nucleic acids. The polypeptide is dTTP/UTP pyrophosphatase (Wolbachia pipientis subsp. Culex pipiens (strain wPip)).